The sequence spans 275 residues: Transmembrane protein 45B (275 aa).

Helical transmembrane passes span 7-27 (HALPGSFFLIIGLCWSVKYPL), 47-67 (IVEAAIRTLFSVTGILAEQFV), 94-114 (LFFAVSGIVDMLTYLVSHVPL), 116-136 (VDRLVMAVAVFMEGFLFYYHV), 146-166 (IHSLLLYALFGGCVSISLEVI), 180-200 (LIILQGTWFWQIGFVLFPPFG), and 212-232 (LMFITMCFCWHYLAALSIVAV). Serine 270 and serine 272 each carry phosphoserine.

The protein belongs to the TMEM45 family. As to quaternary structure, (Microbial infection) Interacts with sindbis virus nsP1 and nsP4; these interactions lead to viral RNA replication inhibition. (Microbial infection) Interacts with chikungunya virus nsP1 and nsP4; these interactions lead to viral RNA replication inhibition.

The protein resides in the endosome membrane. Its subcellular location is the lysosome membrane. It is found in the golgi apparatus. It localises to the trans-Golgi network membrane. Plays a role in innate immunity. Mechanistically, promotes alphaviruses RNA degradation by interacting with the viral polymerase nsP4 and the mRNA-capping enzyme nsP1 and thereby interfering with the interaction between viral RNA and nsP1. This Homo sapiens (Human) protein is Transmembrane protein 45B (TMEM45B).